We begin with the raw amino-acid sequence, 205 residues long: Imidazole glycerol phosphate synthase subunit HisH (205 aa).

One can recognise a Glutamine amidotransferase type-1 domain in the interval 1–205 (MITIVDYQMG…RFATAPVEVA (205 aa)). Residue cysteine 79 is the Nucleophile of the active site. Residues histidine 182 and glutamate 184 contribute to the active site.

In terms of assembly, heterodimer of HisH and HisF.

Its subcellular location is the cytoplasm. The catalysed reaction is 5-[(5-phospho-1-deoxy-D-ribulos-1-ylimino)methylamino]-1-(5-phospho-beta-D-ribosyl)imidazole-4-carboxamide + L-glutamine = D-erythro-1-(imidazol-4-yl)glycerol 3-phosphate + 5-amino-1-(5-phospho-beta-D-ribosyl)imidazole-4-carboxamide + L-glutamate + H(+). It carries out the reaction L-glutamine + H2O = L-glutamate + NH4(+). Its pathway is amino-acid biosynthesis; L-histidine biosynthesis; L-histidine from 5-phospho-alpha-D-ribose 1-diphosphate: step 5/9. In terms of biological role, IGPS catalyzes the conversion of PRFAR and glutamine to IGP, AICAR and glutamate. The HisH subunit catalyzes the hydrolysis of glutamine to glutamate and ammonia as part of the synthesis of IGP and AICAR. The resulting ammonia molecule is channeled to the active site of HisF. The sequence is that of Imidazole glycerol phosphate synthase subunit HisH from Rhodopirellula baltica (strain DSM 10527 / NCIMB 13988 / SH1).